The primary structure comprises 96 residues: UPF0235 protein Sputcn32_2690 (96 aa).

It belongs to the UPF0235 family.

The sequence is that of UPF0235 protein Sputcn32_2690 from Shewanella putrefaciens (strain CN-32 / ATCC BAA-453).